Here is a 553-residue protein sequence, read N- to C-terminus: Putative transport protein YidE (553 aa).

Helical transmembrane passes span 4-24, 28-48, 65-85, 95-115, and 158-178; these read IALTVSILALVAVVGLFIGNV, GIGLGIGGVLFGGIIVGHFVS, FGLILFVYTIGIQVGPGFFAS, LFAVLIVIIGGLVTAILHKLF, and MSYAMAYPFGICGILFTMWML. RCK C-terminal domains are found at residues 191 to 276 and 279 to 361; these read QQHE…VIGQ and DTSL…VLGN. Helical transmembrane passes span 371–391, 393–413, 431–448, 464–484, 493–513, and 533–553; these read MLPVFIGIGLGVLLGSIPVFV, GFPAALKLGLAGGLLIMALIL, NLALRELGIVLFLSVVGL, LSWIGYGALITAVPLITVGIL, YLTMCGMLAGSMTDPPALAFA, and LVMFLRIITPQLLAVLFWSIG.

Belongs to the AAE transporter (TC 2.A.81) family. YidE subfamily.

It is found in the cell membrane. This chain is Putative transport protein YidE, found in Shigella sonnei (strain Ss046).